We begin with the raw amino-acid sequence, 152 residues long: MVKAVAVLSNSNEVSGTINFSQEGNGPTTVTGTLAGLKPGLHGFHIHALGDTTNGCISTGPHFNPNGKEHGAPEDETRHAGDLGNINVGDDGTVSFTITDNHIPLTGTNSIIGRAVVVHADPDDLGKGGHELSKTTGNAGGRVACGIIGLQG.

3 residues coordinate Cu cation: H45, H47, and H62. An intrachain disulfide couples C56 to C145. Residues H62, H70, H79, and D82 each contribute to the Zn(2+) site. H119 contacts Cu cation.

Belongs to the Cu-Zn superoxide dismutase family. Homodimer. The cofactor is Cu cation. Zn(2+) serves as cofactor.

The protein resides in the cytoplasm. It carries out the reaction 2 superoxide + 2 H(+) = H2O2 + O2. Functionally, destroys radicals which are normally produced within the cells and which are toxic to biological systems. The chain is Superoxide dismutase [Cu-Zn] (SODCC) from Pisum sativum (Garden pea).